The primary structure comprises 178 residues: Translation initiation factor IF-3 (178 aa).

The protein belongs to the IF-3 family. Monomer.

It localises to the cytoplasm. Functionally, IF-3 binds to the 30S ribosomal subunit and shifts the equilibrium between 70S ribosomes and their 50S and 30S subunits in favor of the free subunits, thus enhancing the availability of 30S subunits on which protein synthesis initiation begins. The sequence is that of Translation initiation factor IF-3 from Ureaplasma parvum serovar 3 (strain ATCC 700970).